The sequence spans 80 residues: Large ribosomal subunit protein uL29 (80 aa).

This sequence belongs to the universal ribosomal protein uL29 family.

The chain is Large ribosomal subunit protein uL29 from Saccharopolyspora erythraea (strain ATCC 11635 / DSM 40517 / JCM 4748 / NBRC 13426 / NCIMB 8594 / NRRL 2338).